A 168-amino-acid polypeptide reads, in one-letter code: Lipoprotein signal peptidase (168 aa).

The next 3 helical transmembrane spans lie at 15 to 35 (AIAA…LGLL), 69 to 89 (WGRW…AVWV), and 95 to 115 (PLLA…NLID). Residues Asp124 and Asp141 contribute to the active site. The helical transmembrane segment at 133–153 (FPWVFNIADSGISVGVALLLL) threads the bilayer.

It belongs to the peptidase A8 family.

The protein localises to the cell inner membrane. It catalyses the reaction Release of signal peptides from bacterial membrane prolipoproteins. Hydrolyzes -Xaa-Yaa-Zaa-|-(S,diacylglyceryl)Cys-, in which Xaa is hydrophobic (preferably Leu), and Yaa (Ala or Ser) and Zaa (Gly or Ala) have small, neutral side chains.. The protein operates within protein modification; lipoprotein biosynthesis (signal peptide cleavage). This protein specifically catalyzes the removal of signal peptides from prolipoproteins. This Caulobacter vibrioides (strain ATCC 19089 / CIP 103742 / CB 15) (Caulobacter crescentus) protein is Lipoprotein signal peptidase.